The chain runs to 416 residues: Argininosuccinate synthase (416 aa).

ATP-binding positions include 19-27 (AYSGGLDTS) and A46. L-citrulline contacts are provided by Y97 and S102. An ATP-binding site is contributed by G127. Positions 129, 133, and 134 each coordinate L-aspartate. N133 serves as a coordination point for L-citrulline. L-citrulline is bound by residues R137, S188, S197, E273, and Y285.

The protein belongs to the argininosuccinate synthase family. Type 1 subfamily. Homotetramer.

It localises to the cytoplasm. The enzyme catalyses L-citrulline + L-aspartate + ATP = 2-(N(omega)-L-arginino)succinate + AMP + diphosphate + H(+). It functions in the pathway amino-acid biosynthesis; L-arginine biosynthesis; L-arginine from L-ornithine and carbamoyl phosphate: step 2/3. This Granulibacter bethesdensis (strain ATCC BAA-1260 / CGDNIH1) protein is Argininosuccinate synthase.